We begin with the raw amino-acid sequence, 160 residues long: Transcription elongation factor GreA (160 aa).

A coiled-coil region spans residues 43 to 75 (LSENAEYEAAREQQAQMESKIVDLENKLTRASI).

This sequence belongs to the GreA/GreB family.

Necessary for efficient RNA polymerase transcription elongation past template-encoded arresting sites. The arresting sites in DNA have the property of trapping a certain fraction of elongating RNA polymerases that pass through, resulting in locked ternary complexes. Cleavage of the nascent transcript by cleavage factors such as GreA or GreB allows the resumption of elongation from the new 3'terminus. GreA releases sequences of 2 to 3 nucleotides. This chain is Transcription elongation factor GreA, found in Prosthecochloris aestuarii (strain DSM 271 / SK 413).